A 324-amino-acid polypeptide reads, in one-letter code: Glyoxylate/hydroxypyruvate reductase B (324 aa).

Catalysis depends on residues Arg237 and Glu266. His285 functions as the Proton donor in the catalytic mechanism.

This sequence belongs to the D-isomer specific 2-hydroxyacid dehydrogenase family. GhrB subfamily. Homodimer.

The protein localises to the cytoplasm. The enzyme catalyses glycolate + NADP(+) = glyoxylate + NADPH + H(+). It catalyses the reaction (R)-glycerate + NAD(+) = 3-hydroxypyruvate + NADH + H(+). It carries out the reaction (R)-glycerate + NADP(+) = 3-hydroxypyruvate + NADPH + H(+). Its function is as follows. Catalyzes the NADPH-dependent reduction of glyoxylate and hydroxypyruvate into glycolate and glycerate, respectively. The sequence is that of Glyoxylate/hydroxypyruvate reductase B from Salmonella heidelberg (strain SL476).